A 514-amino-acid chain; its full sequence is Ammonium transporter 1 member 2 (514 aa).

11 helical membrane-spanning segments follow: residues 56-76, 91-111, 140-160, 165-185, 212-232, 257-277, 291-313, 328-348, 351-371, 380-400, and 431-451; these read LLFS…LCAG, VLDA…FAFG, FFLY…GSIA, FVAY…TVSH, FAGS…GALV, VVLG…GSFL, GQWS…AALT, IDVC…CAVV, WAAI…NLLA, LEAA…TGLF, and IVQI…LFYG. Residue T472 is modified to Phosphothreonine.

This sequence belongs to the ammonia transporter channel (TC 1.A.11.2) family. As to expression, high expression in root.

It is found in the membrane. Functionally, ammonium transporter probably involved in ammonium uptake from the soil. This is Ammonium transporter 1 member 2 (AMT1-2) from Arabidopsis thaliana (Mouse-ear cress).